The primary structure comprises 186 residues: Signal peptidase I P (186 aa).

The Cytoplasmic portion of the chain corresponds to 1-15 (MTKEKVFKKKSSILE). The chain crosses the membrane as a helical span at residues 16–35 (WGKAIVIAVILALLIRNFLF). The Extracellular portion of the chain corresponds to 36–186 (EPYVVEGKSM…FPFSNMRKAK (151 aa)). Active-site residues include S44 and K86.

Belongs to the peptidase S26 family.

It is found in the cell membrane. It carries out the reaction Cleavage of hydrophobic, N-terminal signal or leader sequences from secreted and periplasmic proteins.. This is Signal peptidase I P (sipP) from Bacillus subtilis subsp. natto.